Consider the following 165-residue polypeptide: Chorismate pyruvate-lyase (165 aa).

M35, R77, L115, and E156 together coordinate substrate.

Belongs to the UbiC family. Monomer.

It localises to the cytoplasm. It carries out the reaction chorismate = 4-hydroxybenzoate + pyruvate. It participates in cofactor biosynthesis; ubiquinone biosynthesis. Its function is as follows. Removes the pyruvyl group from chorismate, with concomitant aromatization of the ring, to provide 4-hydroxybenzoate (4HB) for the ubiquinone pathway. The protein is Chorismate pyruvate-lyase of Escherichia coli O157:H7.